Here is a 131-residue protein sequence, read N- to C-terminus: Small ribosomal subunit protein bS6 (131 aa).

The disordered stretch occupies residues 98 to 131; sequence EASPMVKAKDERRERREDFANETSEETEAGDSEE. Positions 104 to 116 are enriched in basic and acidic residues; it reads KAKDERRERREDF. The segment covering 120–131 has biased composition (acidic residues); the sequence is TSEETEAGDSEE.

This sequence belongs to the bacterial ribosomal protein bS6 family.

Its function is as follows. Binds together with bS18 to 16S ribosomal RNA. This is Small ribosomal subunit protein bS6 from Edwardsiella ictaluri (strain 93-146).